A 90-amino-acid polypeptide reads, in one-letter code: DNA-directed RNA polymerase subunit omega (90 aa).

This sequence belongs to the RNA polymerase subunit omega family. The RNAP catalytic core consists of 2 alpha, 1 beta, 1 beta' and 1 omega subunit. When a sigma factor is associated with the core the holoenzyme is formed, which can initiate transcription.

The catalysed reaction is RNA(n) + a ribonucleoside 5'-triphosphate = RNA(n+1) + diphosphate. In terms of biological role, promotes RNA polymerase assembly. Latches the N- and C-terminal regions of the beta' subunit thereby facilitating its interaction with the beta and alpha subunits. This is DNA-directed RNA polymerase subunit omega from Histophilus somni (strain 129Pt) (Haemophilus somnus).